Reading from the N-terminus, the 182-residue chain is Large ribosomal subunit protein uL16 (182 aa).

Belongs to the universal ribosomal protein uL16 family.

This chain is Large ribosomal subunit protein uL16, found in Pyrobaculum islandicum (strain DSM 4184 / JCM 9189 / GEO3).